The sequence spans 294 residues: MPELPEVETVRRGLIPAMEGVRIARVTAHRNDLRFPLQTDFVARLGGRVVTGLGRRAKYLLADLDSGDVLLMHLGMSGSFRVAMDGGQEATPGIFHHPRSESRTHDHVVFEMDNGAVISFNDPRRFGYMKIVARADLEAEPFLKALGPEPLGNEFNAAMLAQACAGKATSLKAALLDQRVVAGLGNIYVCEALYRAHLSPKRRASTLASRTGAPSGHAERLVPAIRTVLNAAIEAGGSSLRDHRQTTGELGYFQHSFQVYDREGEPCRTRGCKGTVKRFTQNGRSTFWCPSCQK.

Pro2 serves as the catalytic Schiff-base intermediate with DNA. The Proton donor role is filled by Glu3. Residue Lys58 is the Proton donor; for beta-elimination activity of the active site. Positions 105, 124, and 167 each coordinate DNA. The FPG-type zinc finger occupies 258–294 (QVYDREGEPCRTRGCKGTVKRFTQNGRSTFWCPSCQK). Arg284 serves as the catalytic Proton donor; for delta-elimination activity.

It belongs to the FPG family. In terms of assembly, monomer. Zn(2+) is required as a cofactor.

It catalyses the reaction Hydrolysis of DNA containing ring-opened 7-methylguanine residues, releasing 2,6-diamino-4-hydroxy-5-(N-methyl)formamidopyrimidine.. The enzyme catalyses 2'-deoxyribonucleotide-(2'-deoxyribose 5'-phosphate)-2'-deoxyribonucleotide-DNA = a 3'-end 2'-deoxyribonucleotide-(2,3-dehydro-2,3-deoxyribose 5'-phosphate)-DNA + a 5'-end 5'-phospho-2'-deoxyribonucleoside-DNA + H(+). Involved in base excision repair of DNA damaged by oxidation or by mutagenic agents. Acts as a DNA glycosylase that recognizes and removes damaged bases. Has a preference for oxidized purines, such as 7,8-dihydro-8-oxoguanine (8-oxoG). Has AP (apurinic/apyrimidinic) lyase activity and introduces nicks in the DNA strand. Cleaves the DNA backbone by beta-delta elimination to generate a single-strand break at the site of the removed base with both 3'- and 5'-phosphates. In Afipia carboxidovorans (strain ATCC 49405 / DSM 1227 / KCTC 32145 / OM5) (Oligotropha carboxidovorans), this protein is Formamidopyrimidine-DNA glycosylase.